A 387-amino-acid chain; its full sequence is Gamma-butyrobetaine dioxygenase (387 aa).

Zn(2+)-binding residues include C38, C40, C43, and H82. Positions 202, 204, and 347 each coordinate Fe cation. S351 carries the post-translational modification Phosphoserine.

It belongs to the gamma-BBH/TMLD family. Fe(2+) serves as cofactor. Requires L-ascorbate as cofactor. As to expression, expressed in the liver and in some extend in the testis and the epididymis.

The protein resides in the cytoplasm. It carries out the reaction 4-(trimethylamino)butanoate + 2-oxoglutarate + O2 = carnitine + succinate + CO2. Its pathway is amine and polyamine biosynthesis; carnitine biosynthesis. In terms of biological role, catalyzes the formation of L-carnitine from gamma-butyrobetaine. This chain is Gamma-butyrobetaine dioxygenase (Bbox1), found in Rattus norvegicus (Rat).